We begin with the raw amino-acid sequence, 882 residues long: Alanine--tRNA ligase (882 aa).

4 residues coordinate Zn(2+): H568, H572, C670, and H674.

The protein belongs to the class-II aminoacyl-tRNA synthetase family. Requires Zn(2+) as cofactor.

It localises to the cytoplasm. It catalyses the reaction tRNA(Ala) + L-alanine + ATP = L-alanyl-tRNA(Ala) + AMP + diphosphate. Functionally, catalyzes the attachment of alanine to tRNA(Ala) in a two-step reaction: alanine is first activated by ATP to form Ala-AMP and then transferred to the acceptor end of tRNA(Ala). Also edits incorrectly charged Ser-tRNA(Ala) and Gly-tRNA(Ala) via its editing domain. The chain is Alanine--tRNA ligase from Lactobacillus gasseri (strain ATCC 33323 / DSM 20243 / BCRC 14619 / CIP 102991 / JCM 1131 / KCTC 3163 / NCIMB 11718 / NCTC 13722 / AM63).